The chain runs to 93 residues: Stromal cell-derived factor 1 (93 aa).

Residues 1–21 form the signal peptide; the sequence is MNAKVVVVLVLVLTALCLSDG. The Receptor activation motif motif lies at 22-23; sequence KP. The receptor and heparin binding stretch occupies residues 29–33; the sequence is RCPCR. 2 cysteine pairs are disulfide-bonded: Cys30–Cys55 and Cys32–Cys71. Receptor binding stretches follow at residues 39–41, 48–50, and 60–70; these read VAR, KIL, and VARLKNNNRQV. Heparin contacts are provided by residues 41–51, Arg62, Gln69, and Lys85; that span reads RANVKHLKILN.

Belongs to the intercrine alpha (chemokine CxC) family. In terms of assembly, monomer or homodimer; in equilibrium. Dimer formation is induced by non acidic pH and the presence of multivalent anions, and by binding to CXCR4 or heparin. Monomeric form is required for full chemotactic activity and resistance to ischemia/reperfusion injury, whereas the dimeric form acts as a partial agonist of CXCR4, stimulating Ca2+ mobilization but with no chemotactic activity and instead acts as a selective antagonist that blocks chemotaxis induced by the monomeric form. Interacts with the N-terminus of ACKR3. Interacts with integrin subunit ITGB3 (via the allosteric site (site 2)). Interacts with TNFAIP6 (via Link domain). As to quaternary structure, (Microbial infection) Interacts with molluscum contagiosum virus protein MC148. Post-translationally, processed forms SDF-1-beta(3-72) and SDF-1-alpha(3-67) are produced after secretion by proteolytic cleavage of isoforms Beta and Alpha, respectively. The N-terminal processing is probably achieved by DPP4. Isoform Alpha is first cleaved at the C-terminus to yield a SDF-1-alpha(1-67) intermediate before being processed at the N-terminus. The C-terminal processing of isoform Alpha is reduced by binding to heparin and, probably, cell surface proteoglycans. As to expression, isoform Alpha and isoform Beta are ubiquitously expressed, with highest levels detected in liver, pancreas and spleen. Isoform Gamma is mainly expressed in heart, with weak expression detected in several other tissues. Isoform Delta, isoform Epsilon and isoform Theta have highest expression levels in pancreas, with lower levels detected in heart, kidney, liver and spleen.

The protein localises to the secreted. Its function is as follows. Chemoattractant active on T-lymphocytes and monocytes but not neutrophils. Activates the C-X-C chemokine receptor CXCR4 to induce a rapid and transient rise in the level of intracellular calcium ions and chemotaxis. SDF-1-beta(3-72) and SDF-1-alpha(3-67) show a reduced chemotactic activity. Binding to cell surface proteoglycans seems to inhibit formation of SDF-1-alpha(3-67) and thus to preserve activity on local sites. Also binds to atypical chemokine receptor ACKR3, which activates the beta-arrestin pathway and acts as a scavenger receptor for SDF-1. Binds to the allosteric site (site 2) of integrins and activates integrins ITGAV:ITGB3, ITGA4:ITGB1 and ITGA5:ITGB1 in a CXCR4-independent manner. Acts as a positive regulator of monocyte migration and a negative regulator of monocyte adhesion via the LYN kinase. Stimulates migration of monocytes and T-lymphocytes through its receptors, CXCR4 and ACKR3, and decreases monocyte adherence to surfaces coated with ICAM-1, a ligand for beta-2 integrins. SDF1A/CXCR4 signaling axis inhibits beta-2 integrin LFA-1 mediated adhesion of monocytes to ICAM-1 through LYN kinase. Inhibits CXCR4-mediated infection by T-cell line-adapted HIV-1. Plays a protective role after myocardial infarction. Induces down-regulation and internalization of ACKR3 expressed in various cells. Has several critical functions during embryonic development; required for B-cell lymphopoiesis, myelopoiesis in bone marrow and heart ventricular septum formation. Stimulates the proliferation of bone marrow-derived B-cell progenitors in the presence of IL7 as well as growth of stromal cell-dependent pre-B-cells. The chain is Stromal cell-derived factor 1 (CXCL12) from Homo sapiens (Human).